Here is an 848-residue protein sequence, read N- to C-terminus: MFERFTDRARKVVVLAQEEARMLNHNYIGTEHILLGLIHEGEGVAAKSLESLGISLEGVRSQVEEIIGQGQQAPSGHIPFTPRAKKVLELSLREALQLGHNYIGTEHILLGLIREGEGVAAQVLVKLGAELTRVRQQVIQLLSGYQGKEAAEAGTGGRGGESGSPSTSLVLDQFGRNLTAAAMEGKLDPVIGREKEIERVMQVLSRRTKNNPVLIGEPGVGKTAVVEGLAQAIVHGEVPETLKDKQLYTLDLGSLVAGSRYRGDFEERLKKVLKEINTRGDIILFIDELHTLVGAGAAEGAIDAASILKPKLARGELQTIGATTLDEYRKYIEKDAALERRFQPVQVGEPTVEHTIEILKGLRDRYEAHHRVSITDAAMVAAATLADRYINDRFLPDKAIDLIDEAGARMRIRRMTAPPDLREFDEKIAEARREKESAIDAQDFEKAASLRDREKTLVAQRAEREKQWRSGDLDVVAEVDDEQIAEVLGNWTGIPVFKLTEAETTRLLRMEEELHKRIIGQEDAVKAVSKAIRRTRAGLKDPKRPSGSFIFAGPSGVGKTELSKALANFLFGDDDALIQIDMGEFHDRFTASRLFGAPPGYVGYEEGGQLTEKVRRKPFSVVLFDEIEKAHQEIYNSLLQVLEDGRLTDGQGRTVDFKNTVLIFTSNLGTSDISKPVGLGFSKGGGENDYERMKQKVNDELKKHFRPEFLNRIDDIIVFHQLTREEIIRMVDLMISRVAGQLKSKDMALVLTDAAKALLAKRGFDPVLGARPLRRTIQREIEDQLSEKILFEEVGPGQVVTVDVDNWDGEGPGEDAVFTFTGTRKPPAEPDLAKAGAHSAGGPEPAAR.

The 143-residue stretch at 2–144 folds into the Clp R domain; sequence FERFTDRARK…RQQVIQLLSG (143 aa). Repeat regions lie at residues 5–70 and 80–144; these read FTDR…IGQG and FTPR…LLSG. Residues 171–418 form an i region; the sequence is LDQFGRNLTA…RMRIRRMTAP (248 aa). 216–223 lines the ATP pocket; it reads GEPGVGKT. Residues 425-460 enclose the UVR domain; it reads DEKIAEARREKESAIDAQDFEKAASLRDREKTLVAQ. The II stretch occupies residues 479-670; it reads VDDEQIAEVL…VLIFTSNLGT (192 aa). 553-560 is a binding site for ATP; that stretch reads GPSGVGKT. The tract at residues 821–848 is disordered; that stretch reads TGTRKPPAEPDLAKAGAHSAGGPEPAAR.

This sequence belongs to the ClpA/ClpB family. ClpC subfamily.

Its function is as follows. ATP-dependent specificity component of the Clp protease. It directs the protease to specific substrates. Can perform chaperone functions in the absence of ClpP. This is ATP-dependent Clp protease ATP-binding subunit ClpC1 (clpC1) from Mycobacterium tuberculosis (strain CDC 1551 / Oshkosh).